A 293-amino-acid polypeptide reads, in one-letter code: Protease HtpX homolog (293 aa).

2 consecutive transmembrane segments (helical) span residues 4 to 24 (VILFLITNLAVMLVLSATLRI) and 40 to 60 (ALLMFSLVVGFTGSFISLLIS). H146 serves as a coordination point for Zn(2+). The active site involves E147. Zn(2+) is bound at residue H150. The next 2 helical transmembrane spans lie at 161–181 (LIQGVVNTFVVFLARVVGYFV) and 198–218 (VTVIVCEIVFGVLASIIVAWF). E223 lines the Zn(2+) pocket.

Belongs to the peptidase M48B family. Zn(2+) is required as a cofactor.

The protein resides in the cell inner membrane. The chain is Protease HtpX homolog from Bordetella avium (strain 197N).